A 355-amino-acid chain; its full sequence is UPF0421 protein BCE33L2478 (355 aa).

4 helical membrane passes run 19 to 39 (IAVFLTVLVCEFFNIPTIFAV), 74 to 94 (FTFFLGHQALSYALAAMFTIV), 109 to 129 (TLTAVAMIPITADHYFTAFLI), and 131 to 151 (LATTSTGIIVSTVVNFFILPP).

This sequence belongs to the UPF0421 family.

It localises to the cell membrane. The protein is UPF0421 protein BCE33L2478 of Bacillus cereus (strain ZK / E33L).